The chain runs to 256 residues: Imidazole glycerol phosphate synthase subunit HisF (256 aa).

Residues Asp12 and Asp131 contribute to the active site.

It belongs to the HisA/HisF family. As to quaternary structure, heterodimer of HisH and HisF.

It localises to the cytoplasm. The enzyme catalyses 5-[(5-phospho-1-deoxy-D-ribulos-1-ylimino)methylamino]-1-(5-phospho-beta-D-ribosyl)imidazole-4-carboxamide + L-glutamine = D-erythro-1-(imidazol-4-yl)glycerol 3-phosphate + 5-amino-1-(5-phospho-beta-D-ribosyl)imidazole-4-carboxamide + L-glutamate + H(+). It participates in amino-acid biosynthesis; L-histidine biosynthesis; L-histidine from 5-phospho-alpha-D-ribose 1-diphosphate: step 5/9. IGPS catalyzes the conversion of PRFAR and glutamine to IGP, AICAR and glutamate. The HisF subunit catalyzes the cyclization activity that produces IGP and AICAR from PRFAR using the ammonia provided by the HisH subunit. This chain is Imidazole glycerol phosphate synthase subunit HisF, found in Pseudomonas fluorescens (strain Pf0-1).